Reading from the N-terminus, the 340-residue chain is SH2 domain-containing adapter protein D (340 aa).

3 disordered regions span residues 1–77 (MAKW…PKHR), 94–186 (GGPG…QPWE), and 198–230 (VQFD…ERVD). Positions 98–108 (EELEADTEYLD) are enriched in acidic residues. The span at 171–186 (PQEDERPADEYDQPWE) shows a compositional bias: basic and acidic residues. One can recognise an SH2 domain in the interval 240-335 (WFHGPLNRAD…AEHLALLYPV (96 aa)).

Tyrosine phosphorylated by ABL.

May function as an adapter protein. In Homo sapiens (Human), this protein is SH2 domain-containing adapter protein D (SHD).